A 207-amino-acid chain; its full sequence is Fibroblast growth factor 18 (207 aa).

The signal sequence occupies residues 1-27 (MYSAPSACTCLCLHFLLLCFQVQVLAA). N-linked (GlcNAc...) asparagine glycosylation occurs at Asn39. Cys109 and Cys127 are joined by a disulfide. Residue Asn137 is glycosylated (N-linked (GlcNAc...) asparagine). Residues 157-183 (GRPRKGPKTRENQQDVHFMKRYPKGQT) form a disordered region. The segment covering 164–174 (KTRENQQDVHF) has biased composition (basic and acidic residues).

It belongs to the heparin-binding growth factors family. In terms of assembly, interacts with FGFR3 and FGFR4. Mainly expressed in the lung. Not detected in brain, heart, liver, kidney and small intestine.

The protein resides in the secreted. Functionally, plays an important role in the regulation of cell proliferation, cell differentiation and cell migration. Required for normal ossification and bone development. Stimulates hepatic and intestinal proliferation. The sequence is that of Fibroblast growth factor 18 (Fgf18) from Rattus norvegicus (Rat).